The chain runs to 349 residues: Myocyte-specific enhancer factor 2B (349 aa).

Residues 3–57 (RKKIQISRILDQRNRQVTFTKRKFGLMKKAYELSVLCDCDIALIIFNSAQRLFQY) enclose the MADS-box domain. Positions 58 to 86 (ASSDMDRVLLKYTEYSEPHESRTNADILQ) form a DNA-binding region, mef2-type. Disordered stretches follow at residues 237-317 (GSFA…DFPR) and 330-349 (AEPLRPSASLHRLTPDSWPR).

It belongs to the MEF2 family. Heterodimer. Interacts with HDAC9. Interacts with HDAC7. As to expression, highest expression found in embryonic heart and skeletal muscle. Low levels found in adult spleen, lung and testis while no expression is found in adult heart, brain or skeletal muscle.

It is found in the nucleus. Transcriptional activator which binds specifically to the MEF2 element, 5'-YTA[AT](4)TAR-3', found in numerous muscle-specific genes. Activates transcription via this element. May be involved in muscle-specific and/or growth factor-related transcription. This is Myocyte-specific enhancer factor 2B (Mef2b) from Mus musculus (Mouse).